Reading from the N-terminus, the 346-residue chain is Very-long-chain 3-oxoacyl-CoA reductase (346 aa).

A helical transmembrane segment spans residues 26–46 (TASVLLVAGGWFVVSRVWTFL). 8 residues coordinate NADP(+): I71, D126, D134, N153, Y220, K224, I253, and S255. Y220 (proton donor) is an active-site residue. The Lowers pKa of active site Tyr role is filled by K224.

Belongs to the short-chain dehydrogenases/reductases (SDR) family.

It localises to the endoplasmic reticulum membrane. The enzyme catalyses a very-long-chain (3R)-3-hydroxyacyl-CoA + NADP(+) = a very-long-chain 3-oxoacyl-CoA + NADPH + H(+). It functions in the pathway lipid metabolism; fatty acid biosynthesis. Component of the microsomal membrane bound fatty acid elongation system, which produces the 26-carbon very long-chain fatty acids (VLCFA) from palmitate. Catalyzes the reduction of the 3-ketoacyl-CoA intermediate that is formed in each cycle of fatty acid elongation. VLCFAs serve as precursors for ceramide and sphingolipids. The chain is Very-long-chain 3-oxoacyl-CoA reductase from Emericella nidulans (strain FGSC A4 / ATCC 38163 / CBS 112.46 / NRRL 194 / M139) (Aspergillus nidulans).